The chain runs to 319 residues: Acetyl-coenzyme A carboxylase carboxyl transferase subunit alpha (319 aa).

The region spanning 39–296 (EINRLRSKSI…KTQLLLDLTE (258 aa)) is the CoA carboxyltransferase C-terminal domain.

This sequence belongs to the AccA family. In terms of assembly, acetyl-CoA carboxylase is a heterohexamer composed of biotin carboxyl carrier protein (AccB), biotin carboxylase (AccC) and two subunits each of ACCase subunit alpha (AccA) and ACCase subunit beta (AccD).

The protein localises to the cytoplasm. It carries out the reaction N(6)-carboxybiotinyl-L-lysyl-[protein] + acetyl-CoA = N(6)-biotinyl-L-lysyl-[protein] + malonyl-CoA. Its pathway is lipid metabolism; malonyl-CoA biosynthesis; malonyl-CoA from acetyl-CoA: step 1/1. Component of the acetyl coenzyme A carboxylase (ACC) complex. First, biotin carboxylase catalyzes the carboxylation of biotin on its carrier protein (BCCP) and then the CO(2) group is transferred by the carboxyltransferase to acetyl-CoA to form malonyl-CoA. The chain is Acetyl-coenzyme A carboxylase carboxyl transferase subunit alpha from Blochmanniella pennsylvanica (strain BPEN).